Consider the following 249-residue polypeptide: Methyl-coenzyme M reductase subunit gamma (249 aa).

A disordered region spans residues 43-62 (RAPGEEYPSVHPPLEELDEP). R120 lines the coenzyme M pocket.

This sequence belongs to the methyl-coenzyme M reductase gamma subunit family. MCR is a hexamer of two alpha, two beta, and two gamma chains, forming a dimer of heterotrimers. Coenzyme F430 serves as cofactor.

The protein resides in the cytoplasm. It carries out the reaction coenzyme B + methyl-coenzyme M = methane + coenzyme M-coenzyme B heterodisulfide. The protein operates within one-carbon metabolism; methyl-coenzyme M reduction; methane from methyl-coenzyme M: step 1/1. Functionally, component of the methyl-coenzyme M reductase (MCR) I that catalyzes the reductive cleavage of methyl-coenzyme M (CoM-S-CH3 or 2-(methylthio)ethanesulfonate) using coenzyme B (CoB or 7-mercaptoheptanoylthreonine phosphate) as reductant which results in the production of methane and the mixed heterodisulfide of CoB and CoM (CoM-S-S-CoB). This is the final step in methanogenesis. The polypeptide is Methyl-coenzyme M reductase subunit gamma (mcrG) (Methanothermus fervidus).